The primary structure comprises 158 residues: Phosphopantetheine adenylyltransferase (158 aa).

This sequence belongs to the eukaryotic CoaD family.

The protein localises to the cytoplasm. It catalyses the reaction (R)-4'-phosphopantetheine + ATP + H(+) = 3'-dephospho-CoA + diphosphate. It functions in the pathway cofactor biosynthesis; coenzyme A biosynthesis. Functionally, reversibly transfers an adenylyl group from ATP to 4'-phosphopantetheine, yielding dephospho-CoA (dPCoA) and pyrophosphate. The polypeptide is Phosphopantetheine adenylyltransferase (Pyrococcus horikoshii (strain ATCC 700860 / DSM 12428 / JCM 9974 / NBRC 100139 / OT-3)).